Here is a 106-residue protein sequence, read N- to C-terminus: Small ribosomal subunit protein uS17 (106 aa).

The protein belongs to the universal ribosomal protein uS17 family. In terms of assembly, part of the 30S ribosomal subunit.

In terms of biological role, one of the primary rRNA binding proteins, it binds specifically to the 5'-end of 16S ribosomal RNA. This is Small ribosomal subunit protein uS17 from Picrophilus torridus (strain ATCC 700027 / DSM 9790 / JCM 10055 / NBRC 100828 / KAW 2/3).